The sequence spans 740 residues: ATP-dependent zinc metalloprotease YME1L (740 aa).

Over 1 to 256 the chain is Mitochondrial matrix; it reads MFSTTTHSVP…KSGKTMKYLK (256 aa). The helical transmembrane segment at 257 to 277 threads the bilayer; the sequence is TLQTIVVIVVFLGIFLSFFTT. At 278-740 the chain is on the mitochondrial intermembrane side; that stretch reads SNGSVFRSIQ…IKAILNESQT (463 aa). 347–351 contacts ATP; it reads GTGKT. Histidine 563 contacts Zn(2+). The active site involves glutamate 564. Positions 567 and 641 each coordinate Zn(2+).

In the N-terminal section; belongs to the AAA ATPase family. The protein in the C-terminal section; belongs to the peptidase M41 family. Zn(2+) is required as a cofactor.

It localises to the mitochondrion inner membrane. Functionally, ATP-dependent metalloprotease that catalyzes the degradation of folded and unfolded proteins with a suitable degron sequence in the mitochondrial intermembrane region. Plays an important role in regulating mitochondrial morphology and function by cleaving Opa1, giving rise to a form of Opa1 that promotes maintenance of normal mitochondrial structure and mitochondrial protein metabolism. Ensures cell proliferation, maintains normal cristae morphology and complex I respiration activity, promotes antiapoptotic activity and protects mitochondria from the accumulation of oxidatively damaged membrane proteins. Required to control the accumulation of nonassembled respiratory chain subunits such as ND-30. This is ATP-dependent zinc metalloprotease YME1L from Drosophila melanogaster (Fruit fly).